Here is an 89-residue protein sequence, read N- to C-terminus: Small ribosomal subunit protein uS15 (89 aa).

Belongs to the universal ribosomal protein uS15 family. In terms of assembly, part of the 30S ribosomal subunit. Forms a bridge to the 50S subunit in the 70S ribosome, contacting the 23S rRNA.

Functionally, one of the primary rRNA binding proteins, it binds directly to 16S rRNA where it helps nucleate assembly of the platform of the 30S subunit by binding and bridging several RNA helices of the 16S rRNA. Its function is as follows. Forms an intersubunit bridge (bridge B4) with the 23S rRNA of the 50S subunit in the ribosome. The polypeptide is Small ribosomal subunit protein uS15 (Anoxybacillus flavithermus (strain DSM 21510 / WK1)).